A 400-amino-acid chain; its full sequence is Homoserine O-acetyltransferase (400 aa).

Residues 64–373 (NAILICHALT…TDRGHDAFLL (310 aa)) form the AB hydrolase-1 domain. Serine 169 acts as the Nucleophile in catalysis. Arginine 239 lines the substrate pocket. Catalysis depends on residues aspartate 335 and histidine 368. Aspartate 369 is a binding site for substrate.

It belongs to the AB hydrolase superfamily. MetX family. In terms of assembly, homodimer.

It localises to the cytoplasm. The catalysed reaction is L-homoserine + acetyl-CoA = O-acetyl-L-homoserine + CoA. The protein operates within amino-acid biosynthesis; L-methionine biosynthesis via de novo pathway; O-acetyl-L-homoserine from L-homoserine: step 1/1. Its function is as follows. Transfers an acetyl group from acetyl-CoA to L-homoserine, forming acetyl-L-homoserine. This chain is Homoserine O-acetyltransferase, found in Bradyrhizobium diazoefficiens (strain JCM 10833 / BCRC 13528 / IAM 13628 / NBRC 14792 / USDA 110).